The sequence spans 351 residues: MSDPVFIAPKGGLTLGSVAEACGVPLPDGADPSQPVTGAAPLETAGPSELAYMDNARYGDALATTRALACLVSPRFAPRVPAGTIALVTRDPYRAYAGLLARLYEEAMRPGSLFAAAGVSPGAHVHPQARLEDGVRIDPGAVVGPGAEIGAGTVLGPNAVIGPNVRIGRDCSIGAGTTLTHALVGNRVIVHPGARIGQDGFGFAMGAGGHIKVPQVGRVIIQDDVEIGANTTIDRGASRDTVVGEGTKIDNLVQIAHNVVIGRHCVIVSGVGISGSTTLEDYVVLGGQVGVVGHLRIGMGSQIAGSSNVNRDVPPGSRWGGTPAKPVRTWFREMTTLARLAERSGKDEAEG.

H257 serves as the catalytic Proton acceptor.

This sequence belongs to the transferase hexapeptide repeat family. LpxD subfamily. As to quaternary structure, homotrimer.

It carries out the reaction a UDP-3-O-[(3R)-3-hydroxyacyl]-alpha-D-glucosamine + a (3R)-hydroxyacyl-[ACP] = a UDP-2-N,3-O-bis[(3R)-3-hydroxyacyl]-alpha-D-glucosamine + holo-[ACP] + H(+). It functions in the pathway bacterial outer membrane biogenesis; LPS lipid A biosynthesis. Catalyzes the N-acylation of UDP-3-O-acylglucosamine using 3-hydroxyacyl-ACP as the acyl donor. Is involved in the biosynthesis of lipid A, a phosphorylated glycolipid that anchors the lipopolysaccharide to the outer membrane of the cell. The chain is UDP-3-O-acylglucosamine N-acyltransferase from Methylorubrum extorquens (strain CM4 / NCIMB 13688) (Methylobacterium extorquens).